A 226-amino-acid chain; its full sequence is Pre-mRNA-splicing factor SPF27 (226 aa).

A2 carries the post-translational modification N-acetylalanine. Position 94 is a phosphoserine (S94). Residues 139–223 (YNENLVHMIE…HGEANKENIR (85 aa)) adopt a coiled-coil conformation.

The protein belongs to the SPF27 family. Component of the pre-catalytic and catalytic spliceosome complexes. Component of the postcatalytic spliceosome P complex. Component of the PRP19-CDC5L splicing complex composed of a core complex comprising a homotetramer of PRPF19, CDC5L, PLRG1 and BCAS2, and at least three less stably associated proteins CTNNBL1, CWC15 and HSPA8. Interacts directly in the complex with PRPF19, CDC5L and PLRG1.

It is found in the nucleus. Its subcellular location is the nucleolus. In terms of biological role, required for pre-mRNA splicing as component of the activated spliceosome. Component of the PRP19-CDC5L complex that forms an integral part of the spliceosome and is required for activating pre-mRNA splicing. May have a scaffolding role in the spliceosome assembly as it contacts all other components of the core complex. The PRP19-CDC5L complex may also play a role in the response to DNA damage (DDR). This Pongo abelii (Sumatran orangutan) protein is Pre-mRNA-splicing factor SPF27 (BCAS2).